The primary structure comprises 198 residues: Probable GTP-binding protein EngB (198 aa).

Residues 36-198 form the EngB-type G domain; that stretch reads SEPQFAFIGR…NLSKLQELLE (163 aa). GTP is bound by residues 44–51, 70–74, 88–91, 155–158, and 182–184; these read GRSNVGKS, GRTQL, DLPG, NKID, and ISA. Residues Ser-51 and Thr-72 each contribute to the Mg(2+) site.

It belongs to the TRAFAC class TrmE-Era-EngA-EngB-Septin-like GTPase superfamily. EngB GTPase family. Requires Mg(2+) as cofactor.

Necessary for normal cell division and for the maintenance of normal septation. This chain is Probable GTP-binding protein EngB, found in Mesomycoplasma hyopneumoniae (strain 232) (Mycoplasma hyopneumoniae).